Here is a 74-residue protein sequence, read N- to C-terminus: DNA-directed RNA polymerase subunit omega (74 aa).

It belongs to the RNA polymerase subunit omega family. In terms of assembly, the RNAP catalytic core consists of 2 alpha, 1 beta, 1 beta' and 1 omega subunit. When a sigma factor is associated with the core the holoenzyme is formed, which can initiate transcription.

It carries out the reaction RNA(n) + a ribonucleoside 5'-triphosphate = RNA(n+1) + diphosphate. Functionally, promotes RNA polymerase assembly. Latches the N- and C-terminal regions of the beta' subunit thereby facilitating its interaction with the beta and alpha subunits. The chain is DNA-directed RNA polymerase subunit omega from Campylobacter jejuni subsp. jejuni serotype O:6 (strain 81116 / NCTC 11828).